The chain runs to 507 residues: Subtilisin-like protease 1 (507 aa).

A signal peptide spans 1–19; the sequence is MGVFRFISISLAAVSAANA. A propeptide spanning residues 20-116 is cleaved from the precursor; sequence AQILSMPHAQ…VEPDTIISVN (97 aa). The 80-residue stretch at 34–113 folds into the Inhibitor I9 domain; it reads SYIVMMKDDT…VMFVEPDTII (80 aa). The region spanning 126-400 is the Peptidase S8 domain; that stretch reads SWGLARISNS…NVLISNGGAK (275 aa). Catalysis depends on charge relay system residues aspartate 158 and histidine 190. Positions 175 to 198 are disordered; the sequence is GSNQVNDGDDRDGSGHGTHTSGTM. N-linked (GlcNAc...) asparagine glycosylation is present at asparagine 251. A compositionally biased stretch (polar residues) spans 282 to 294; sequence NENQDARSSSPAS. The segment at 282-312 is disordered; that stretch reads NENQDARSSSPASEPSVCTVGSSAEDDSRSS. Serine 345 (charge relay system) is an active-site residue. The span at 378-394 shows a compositional bias: polar residues; that stretch reads SSSITDVGPGTPTNVLI. Positions 378 to 486 are disordered; sequence SSSITDVGPG…YPGGDNFDFD (109 aa). 2 stretches are compositionally biased toward pro residues: residues 405-428 and 438-449; these read KPAP…PSQP and EPFPGEPFPGEP. The span at 450 to 461 shows a compositional bias: low complexity; it reads FPGESSPGESAP. Over residues 462–476 the composition is skewed to pro residues; it reads APAPMPPSPQHPHTP.

The protein belongs to the peptidase S8 family.

It is found in the secreted. Functionally, secreted subtilisin-like serine protease with keratinolytic activity that contributes to pathogenicity. The protein is Subtilisin-like protease 1 (SUB1) of Trichophyton equinum (Horse ringworm fungus).